The chain runs to 314 residues: Type II methyltransferase M.HpaI (314 aa).

The protein belongs to the N(4)/N(6)-methyltransferase family.

The enzyme catalyses a 2'-deoxyadenosine in DNA + S-adenosyl-L-methionine = an N(6)-methyl-2'-deoxyadenosine in DNA + S-adenosyl-L-homocysteine + H(+). Its function is as follows. A beta subtype methylase that recognizes the double-stranded sequence 5'-GTTAAC-3', methylates A-5 on both strands, and protects the DNA from cleavage by the HpaI endonuclease. The chain is Type II methyltransferase M.HpaI (hpaIM) from Haemophilus parainfluenzae.